The primary structure comprises 690 residues: Guanylate cyclase soluble subunit alpha-1 (690 aa).

Ser266 carries the post-translational modification Phosphoserine. The Guanylate cyclase domain maps to 480-607 (TMLFSDIVGF…NNVTLANKFE (128 aa)).

Belongs to the adenylyl cyclase class-4/guanylyl cyclase family. In terms of assembly, the active enzyme is formed by a heterodimer of an alpha and a beta subunit. Heterodimer with GUCY1B1. Requires Mg(2+) as cofactor. It depends on Mn(2+) as a cofactor.

Its subcellular location is the cytoplasm. The enzyme catalyses GTP = 3',5'-cyclic GMP + diphosphate. Activated by nitric oxide in the presence of magnesium or manganese ions. This Rattus norvegicus (Rat) protein is Guanylate cyclase soluble subunit alpha-1 (Gucy1a1).